We begin with the raw amino-acid sequence, 60 residues long: Small ribosomal subunit protein uS10 (60 aa).

The protein belongs to the universal ribosomal protein uS10 family.

In Zea mays (Maize), this protein is Small ribosomal subunit protein uS10 (RPS20).